Here is a 578-residue protein sequence, read N- to C-terminus: A-type ATP synthase subunit A (578 aa).

Residue 228-235 participates in ATP binding; sequence GPFGSGKT.

It belongs to the ATPase alpha/beta chains family. As to quaternary structure, has multiple subunits with at least A(3), B(3), C, D, E, F, H, I and proteolipid K(x).

The protein resides in the cell membrane. The catalysed reaction is ATP + H2O + 4 H(+)(in) = ADP + phosphate + 5 H(+)(out). Its function is as follows. Produces ATP from ADP in the presence of a proton gradient across the membrane. The archaeal alpha chain is a catalytic subunit. Functionally, component of the A-type ATP synthase that produces ATP from ADP in the presence of a proton gradient across the membrane. The A chain is the catalytic subunit. This is A-type ATP synthase subunit A from Methanosarcina barkeri.